The primary structure comprises 150 residues: 5-hydroxytryptamine receptor 1B (150 aa).

Topologically, residues 1 to 83 (VEARSRILKQ…AARERKATKT (83 aa)) are extracellular. A compositionally biased stretch (polar residues) spans 27–40 (DSPGSTSSVTSINS). Positions 27 to 50 (DSPGSTSSVTSINSRAPDLPSESG) are disordered. The chain crosses the membrane as a helical span at residues 84–105 (LGIILGAFIVCWLPFFIISLAM). At 106–115 (PICKDACWFH) the chain is on the cytoplasmic side. The chain crosses the membrane as a helical span at residues 116-138 (LAIFDFFTWLGYLNSLINPIIYT). Residues 133–137 (NPIIY) carry the NPxxY motif; important for ligand-induced conformation changes and signaling motif. Residues 139 to 150 (MFNEDFKQAFHK) lie on the Extracellular side of the membrane.

It belongs to the G-protein coupled receptor 1 family. In terms of assembly, homodimer. Heterodimer with HTR1D. Post-translationally, phosphorylated. Desensitization of the receptor may be mediated by its phosphorylation. Palmitoylated.

It is found in the cell membrane. G-protein coupled receptor for 5-hydroxytryptamine (serotonin). Also functions as a receptor for ergot alkaloid derivatives, various anxiolytic and antidepressant drugs and other psychoactive substances, such as lysergic acid diethylamide (LSD). Ligand binding causes a conformation change that triggers signaling via guanine nucleotide-binding proteins (G proteins) and modulates the activity of downstream effectors, such as adenylate cyclase. HTR1B is coupled to G(i)/G(o) G alpha proteins and mediates inhibitory neurotransmission by inhibiting adenylate cyclase activity. Arrestin family members inhibit signaling via G proteins and mediate activation of alternative signaling pathways. Regulates the release of 5-hydroxytryptamine, dopamine and acetylcholine in the brain, and thereby affects neural activity, nociceptive processing, pain perception, mood and behavior. Besides, plays a role in vasoconstriction of cerebral arteries. This Sus scrofa (Pig) protein is 5-hydroxytryptamine receptor 1B (HTR1B).